A 281-amino-acid chain; its full sequence is MATVTAALVKELRERTGAGMMECKKALVEANADIELAIENMRKSGAAKAAKKAGNVAAEGAIIIKEENGSAVLLEVNCQTDFVAKDGNFTAFAQEVAAAALASKATVEELQAQFEEARVALVAKIGENINIRRVQYVEGTAIASYRHGEKIGVVVAGEGDAETLKHVAMHVAASKPEYVNPEDVPADVVAKEKEVQVEIAMNEGKPAEIAEKMVVGRMKKFTGEISLTGQAFIMEPKKTVGEMLKEKGASVATFVRLEVGEGIEKAEGLSFAEEVALAQKG.

The segment at Thr-80 to Val-83 is involved in Mg(2+) ion dislocation from EF-Tu.

The protein belongs to the EF-Ts family.

It is found in the cytoplasm. Associates with the EF-Tu.GDP complex and induces the exchange of GDP to GTP. It remains bound to the aminoacyl-tRNA.EF-Tu.GTP complex up to the GTP hydrolysis stage on the ribosome. This is Elongation factor Ts from Vibrio parahaemolyticus serotype O3:K6 (strain RIMD 2210633).